We begin with the raw amino-acid sequence, 550 residues long: Chaperonin GroEL (550 aa).

ATP is bound by residues 30–33, K51, 87–91, G416, 480–482, and D496; these read TLGP, DGTTT, and NVA. Positions 525 to 550 are disordered; sequence LPKKDDEGGGGDMGGMGGMGGMGGMM. Positions 534–550 are enriched in gly residues; sequence GGDMGGMGGMGGMGGMM.

The protein belongs to the chaperonin (HSP60) family. As to quaternary structure, forms a cylinder of 14 subunits composed of two heptameric rings stacked back-to-back. Interacts with the co-chaperonin GroES.

The protein resides in the cytoplasm. It catalyses the reaction ATP + H2O + a folded polypeptide = ADP + phosphate + an unfolded polypeptide.. Together with its co-chaperonin GroES, plays an essential role in assisting protein folding. The GroEL-GroES system forms a nano-cage that allows encapsulation of the non-native substrate proteins and provides a physical environment optimized to promote and accelerate protein folding. The chain is Chaperonin GroEL from Halorhodospira halophila (strain DSM 244 / SL1) (Ectothiorhodospira halophila (strain DSM 244 / SL1)).